Here is a 181-residue protein sequence, read N- to C-terminus: Transmembrane protein 190 (181 aa).

Positions 1-21 (MVASGIPALSLFLLMQGSVDG) are cleaved as a signal peptide. Residues 22-81 (NGIQGFFYPWSCEGDVWDRESCGGQAAIENPNLCLRLRCCYRDGVCYHQRPDETMRRKHM) are Extracellular-facing. The P-type domain occupies 31 to 71 (WSCEGDVWDRESCGGQAAIENPNLCLRLRCCYRDGVCYHQR). Intrachain disulfides connect cysteine 33–cysteine 61, cysteine 43–cysteine 60, and cysteine 55–cysteine 67. A helical transmembrane segment spans residues 82-102 (WALGWTCGGLLFLISSICLFW). Residues 103-181 (WAKRRDMLHL…EETEGGEDED (79 aa)) are Cytoplasmic-facing. The tract at residues 135–181 (TLSDKKTSAGSVPTSLPTEGNADVSGATEGEGTTEGGEETEGGEDED) is disordered. Residues 142 to 152 (SAGSVPTSLPT) are compositionally biased toward polar residues. Residues 170–181 (GGEETEGGEDED) are compositionally biased toward acidic residues.

It localises to the membrane. This is Transmembrane protein 190 (TMEM190) from Canis lupus familiaris (Dog).